A 200-amino-acid polypeptide reads, in one-letter code: MAFVQEPLPYDFNALEQYGMKGETFEYHYGKHHKAYVDNLNKLTDGTELADKSLEEVIQIAFKDASKAGIFNNAAQVWNHTFFWNSLKPAGGGAPTGEFAAKINQDFGSFDKLKEEFSNAAATQFGSGWAWLIDDGGTLKVTKTPNAENPLAHGQKALLTLDVWEHAYYIDFRNARPAFIKNYLDNLVNWDFAAANYAKA.

Residues histidine 28, histidine 80, aspartate 162, and histidine 166 each contribute to the Fe cation site.

Belongs to the iron/manganese superoxide dismutase family. In terms of assembly, homodimer. Fe cation is required as a cofactor.

The catalysed reaction is 2 superoxide + 2 H(+) = H2O2 + O2. In terms of biological role, destroys superoxide anion radicals which are normally produced within the cells and which are toxic to biological systems. In Nostoc sp. (strain PCC 7120 / SAG 25.82 / UTEX 2576), this protein is Superoxide dismutase [Fe] (sodB).